The following is a 61-amino-acid chain: Bowman-Birk type proteinase inhibitor (61 aa).

7 cysteine pairs are disulfide-bonded: Cys-4–Cys-57, Cys-5–Cys-20, Cys-8–Cys-53, Cys-10–Cys-18, Cys-27–Cys-34, Cys-31–Cys-46, and Cys-36–Cys-44.

The protein belongs to the Bowman-Birk serine protease inhibitor family.

Functionally, strong inhibitor of trypsin with a 1:1 stoichiometry. Weaker inhibitor of chymotrypsin. This chain is Bowman-Birk type proteinase inhibitor, found in Erythrina variegata (Indian coral tree).